Reading from the N-terminus, the 204-residue chain is Tumor protein D53 (204 aa).

Residues 1–31 (MEAQAQGLLETEPLQGRDGDAVGSADFSSML) form a disordered region. A coiled-coil region spans residues 22 to 73 (VGSADFSSMLSEEEKEELKAELIQLEDEITTLRQVLSAKERHLVEIKQKLGM). Serine 29, serine 86, serine 122, and serine 131 each carry phosphoserine. At arginine 133 the chain carries Omega-N-methylarginine. Threonine 146 is modified (phosphothreonine). Phosphoserine is present on residues serine 149 and serine 174. A disordered region spans residues 164-204 (KVGGTNHGGGSFEEVLNSTAHASSQNASAGSRQTKDEELQC). Residues 179–195 (LNSTAHASSQNASAGSR) are compositionally biased toward polar residues.

It belongs to the TPD52 family. In terms of assembly, forms a homodimer or heterodimer with other members of the family.

This Mus musculus (Mouse) protein is Tumor protein D53 (Tpd52l1).